The chain runs to 314 residues: tRNA dimethylallyltransferase (314 aa).

Position 12 to 19 (12 to 19) interacts with ATP; the sequence is GPTAAGKS. 14–19 contributes to the substrate binding site; sequence TAAGKS. Interaction with substrate tRNA regions lie at residues 37–40, 161–165, and 245–250; these read DSAT, QRIQR, and RCVGYR.

Belongs to the IPP transferase family. As to quaternary structure, monomer. It depends on Mg(2+) as a cofactor.

The catalysed reaction is adenosine(37) in tRNA + dimethylallyl diphosphate = N(6)-dimethylallyladenosine(37) in tRNA + diphosphate. Functionally, catalyzes the transfer of a dimethylallyl group onto the adenine at position 37 in tRNAs that read codons beginning with uridine, leading to the formation of N6-(dimethylallyl)adenosine (i(6)A). The protein is tRNA dimethylallyltransferase of Bordetella petrii (strain ATCC BAA-461 / DSM 12804 / CCUG 43448).